Reading from the N-terminus, the 413-residue chain is Monacolin J acid methylbutanoyltransferase (413 aa).

Residue Arg-73 coordinates monacolin J. Catalysis depends on Ser-76, which acts as the Acyl-ester intermediate. Monacolin J contacts are provided by Arg-173, Tyr-188, and Tyr-258. Residue Gly-366 participates in 2-methylbutanoate binding. Residues Glu-388 and Trp-390 each coordinate monacolin J.

Belongs to the class-A beta-lactamase family. As to quaternary structure, interacts with LovF.

The enzyme catalyses monacolin J carboxylate + (S)-2-methylbutanoyl-[2-methylbutanoate polyketide synthase] = lovastatin carboxylate + holo-[2-methylbutanoate polyketide synthase]. It functions in the pathway polyketide biosynthesis; lovastatin biosynthesis. Its function is as follows. Monacolin J acid methylbutanoyltransferase; part of the gene cluster that mediates the biosynthesis of lovastatin (also known as mevinolin, mevacor or monacolin K), a hypolipidemic inhibitor of (3S)-hydroxymethylglutaryl-coenzyme A (HMG-CoA) reductase (HMGR). The first step in the biosynthesis of lovastatin is the production of dihydromonacolin L acid by the lovastatin nonaketide synthase lovB and the trans-acting enoyl reductase lovC via condensation of one acetyl-CoA unit and 8 malonyl-CoA units. Dihydromonacolin L acid is released from lovB by the thioesterase lovG. Next, dihydromonacolin L acid is oxidized by the dihydromonacolin L monooxygenase lovA twice to form monacolin J acid. The 2-methylbutyrate moiety of lovastatin is synthesized by the lovastatin diketide synthase lovF via condensation of one acetyl-CoA unit and one malonyl-CoA unit. Finally, the covalent attachment of this moiety to monacolin J acid is catalyzed by the transesterase lovD to yield lovastatin. LovD has broad substrate specificity and can also convert monacolin J to simvastatin using alpha-dimethylbutanoyl-S-methyl-3-mercaptopropionate (DMB-S-MMP) as the thioester acyl donor, and can also catalyze the reverse reaction and function as hydrolase in vitro. LovD has much higher activity with LovF-bound 2-methylbutanoate than with free diketide substrates. In Aspergillus terreus (strain NIH 2624 / FGSC A1156), this protein is Monacolin J acid methylbutanoyltransferase.